The sequence spans 241 residues: Corrinoid adenosyltransferase MMAB (241 aa).

Residues 1–26 (MAVWGPGGRLGLRGCLGARKLLCPRF) constitute a mitochondrion transit peptide. The segment at 27 to 69 (QSRGPQGVEDGDRPQPSSKTPKVPKIYTKTGDKGFSSTFTGER) is disordered. ATP is bound by residues 54 to 63 (TKTGDKGFSS) and Lys72. A Phosphoserine modification is found at Ser128. Residue 184-188 (RRAER) coordinates ATP. Lys205 bears the N6-succinyllysine mark. Residue Asn208 coordinates ATP. N6-acetyllysine; alternate is present on Lys224. At Lys224 the chain carries N6-succinyllysine; alternate.

This sequence belongs to the Cob(I)alamin adenosyltransferase family. As to quaternary structure, homotrimer.

It is found in the mitochondrion. The enzyme catalyses cob(I)alamin-[corrinoid adenosyltransferase] + ATP = apo-[corrinoid adenosyltransferase] + adenosylcob(III)alamin + triphosphate. Functionally, converts cob(I)alamin to adenosylcobalamin (adenosylcob(III)alamin), a coenzyme for methylmalonyl-CoA mutase, therefore participates in the final step of the vitamin B12 conversion. Generates adenosylcobalamin (AdoCbl) and directly delivers the cofactor to MUT in a transfer that is stimulated by ATP-binding to MMAB and gated by MMAA. In Bos taurus (Bovine), this protein is Corrinoid adenosyltransferase MMAB.